The following is a 193-amino-acid chain: Small ribosomal subunit protein uS7 (193 aa).

Belongs to the universal ribosomal protein uS7 family. As to quaternary structure, part of the 30S ribosomal subunit.

One of the primary rRNA binding proteins, it binds directly to 16S rRNA where it nucleates assembly of the head domain of the 30S subunit. Is located at the subunit interface close to the decoding center. The chain is Small ribosomal subunit protein uS7 from Saccharolobus solfataricus (strain ATCC 35092 / DSM 1617 / JCM 11322 / P2) (Sulfolobus solfataricus).